A 192-amino-acid polypeptide reads, in one-letter code: Thymidine kinase (192 aa).

ATP is bound by residues 9-16 and 87-90; these read SAMNAGKS and DECQ. Glutamate 88 serves as the catalytic Proton acceptor. Cysteine 145, cysteine 147, cysteine 182, and histidine 185 together coordinate Zn(2+).

Belongs to the thymidine kinase family. Homotetramer.

The protein resides in the cytoplasm. It carries out the reaction thymidine + ATP = dTMP + ADP + H(+). This is Thymidine kinase from Vibrio vulnificus (strain YJ016).